The chain runs to 264 residues: uncharacterized protein (264 aa).

2 disordered regions span residues M1 to G52 and G123 to R207. Residues A29–S40 show a composition bias toward low complexity. Positions H144 to S154 are enriched in polar residues. Basic residues predominate over residues A188–R197.

This is an uncharacterized protein from Homo sapiens (Human).